Consider the following 473-residue polypeptide: Glucose facilitated diffusion protein (473 aa).

At 1–13 (MSSESSQGLVTRL) the chain is on the cytoplasmic side. Residues 14–34 (ALIAAIGGLLFGYDSAVIAAI) traverse the membrane as a helical segment. Residues 35–59 (GTPVDIHFIAPRHLSATAAASLSGM) lie on the Periplasmic side of the membrane. A helical transmembrane segment spans residues 60–80 (VVVAVLVGCVTGSLLSGWIGI). Residues 81 to 85 (RFGRR) lie on the Cytoplasmic side of the membrane. A helical membrane pass occupies residues 86 to 106 (GGLLMSSICFVAAGFGAALTE). Topologically, residues 107–112 (KLFGTG) are periplasmic. The helical transmembrane segment at 113–133 (GSALQIFCFFRFLAGLGIGVV) threads the bilayer. Topologically, residues 134–158 (STLTPTYIAEIAPPDKRGQMVSGQQ) are cytoplasmic. Residues 159–179 (MAIVTGALTGYIFTWLLAHFG) traverse the membrane as a helical segment. The Periplasmic segment spans residues 180-187 (SIDWVNAS). The chain crosses the membrane as a helical span at residues 188–208 (GWCWSPASEGLIGIAFLLLLL). Residues 209 to 257 (TAPDTPHWLVMKGRHSEASKILARLEPQADPNLTIQKIKAGFDKAMDKS) are Cytoplasmic-facing. The helical transmembrane segment at 258-278 (SAGLFAFGITVVFAGVSVAAF) threads the bilayer. Topologically, residues 279–303 (QQLVGINAVLYYAPQMFQNLGFGAD) are periplasmic. The chain crosses the membrane as a helical span at residues 304 to 324 (TALLQTISIGVVNFIFTMIAS). The Cytoplasmic portion of the chain corresponds to 325 to 335 (RVVDRFGRKPL). A helical transmembrane segment spans residues 336–356 (LIWGALGMAAMMAVLGCCFWF). Topologically, residues 357 to 366 (KVGGVLPLAS) are periplasmic. Residues 367–387 (VLLYIAVFGMSWGPVCWVVLS) traverse the membrane as a helical segment. Residues 388–396 (EMFPSSIKG) are Cytoplasmic-facing. The helical transmembrane segment at 397-417 (AAMPIAVTGQWLANILVNFLF) threads the bilayer. Topologically, residues 418–429 (KVADGSPALNQT) are periplasmic. The helical transmembrane segment at 430 to 450 (FNHGFSYLVFAALSILGGLIV) threads the bilayer. At 451 to 473 (ARFVPETKGRSLDEIEEMWRSQK) the chain is on the cytoplasmic side.

The protein belongs to the major facilitator superfamily. Sugar transporter (TC 2.A.1.1) family.

The protein resides in the cell inner membrane. In terms of biological role, allows uptake of glucose by the cell; allows growth on glucose minimal medium by E.coli cells impaired in glucose transport. Also transports fructose, but has a strong preference for glucose. This is Glucose facilitated diffusion protein from Zymomonas mobilis subsp. mobilis (strain ATCC 31821 / ZM4 / CP4).